The sequence spans 92 residues: Small ribosomal subunit protein uS19 (92 aa).

It belongs to the universal ribosomal protein uS19 family.

Its function is as follows. Protein S19 forms a complex with S13 that binds strongly to the 16S ribosomal RNA. This Buchnera aphidicola subsp. Baizongia pistaciae (strain Bp) protein is Small ribosomal subunit protein uS19.